A 487-amino-acid chain; its full sequence is L-tartrate/succinate antiporter (487 aa).

A run of 14 helical transmembrane segments spans residues 10–30 (YLAP…AGLE), 33–53 (TWLY…EPVP), 54–74 (GAVV…WLLF), 93–113 (WAVS…FMFG), 137–157 (TLFL…VTPS), 189–209 (IGSY…AIFL), 236–256 (FLGM…LAYV), 292–312 (LMVG…AAMV), 313–333 (GYSV…DIVS), 340–360 (VFFW…TGFI), 370–390 (SLSG…FYLL), 393–413 (FFAS…AAAL), 418–438 (IPLP…SILT), and 465–485 (IFGL…MPVV).

Belongs to the SLC13A/DASS transporter (TC 2.A.47) family. DIT1 subfamily.

Its subcellular location is the cell inner membrane. It carries out the reaction (2R,3R)-tartrate(out) + succinate(in) = (2R,3R)-tartrate(in) + succinate(out). Functionally, catalyzes the uptake of tartrate in exchange for intracellular succinate. Essential for anaerobic L-tartrate fermentation. In Escherichia coli O6:K15:H31 (strain 536 / UPEC), this protein is L-tartrate/succinate antiporter (ttdT).